The chain runs to 647 residues: Threonine--tRNA ligase (647 aa).

Residues 1 to 63 (MADISIKFPD…ASDGSIEIVT (63 aa)) form the TGS domain. Positions 242–540 (DHRVIGNQLD…LTEIYKGAFP (299 aa)) are catalytic. Residues Cys336, His387, and His517 each contribute to the Zn(2+) site.

The protein belongs to the class-II aminoacyl-tRNA synthetase family. As to quaternary structure, homodimer. Zn(2+) serves as cofactor.

It is found in the cytoplasm. The catalysed reaction is tRNA(Thr) + L-threonine + ATP = L-threonyl-tRNA(Thr) + AMP + diphosphate + H(+). Catalyzes the attachment of threonine to tRNA(Thr) in a two-step reaction: L-threonine is first activated by ATP to form Thr-AMP and then transferred to the acceptor end of tRNA(Thr). Also edits incorrectly charged L-seryl-tRNA(Thr). The protein is Threonine--tRNA ligase of Levilactobacillus brevis (strain ATCC 367 / BCRC 12310 / CIP 105137 / JCM 1170 / LMG 11437 / NCIMB 947 / NCTC 947) (Lactobacillus brevis).